Here is a 175-residue protein sequence, read N- to C-terminus: Putative FAS1 domain-containing protein 081L (175 aa).

Positions 28 to 172 (GPIVPSVWTI…GLVHIVDQFP (145 aa)) constitute an FAS1 domain.

In Invertebrate iridescent virus 3 (IIV-3), this protein is Putative FAS1 domain-containing protein 081L.